We begin with the raw amino-acid sequence, 840 residues long: Ubiquitin carboxyl-terminal hydrolase 20 (840 aa).

The segment at 6–117 (DFCPHLDSIG…NSCYMNAALQ (112 aa)) adopts a UBP-type; degenerate zinc-finger fold. Residues cysteine 30, cysteine 33, cysteine 53, and histidine 60 each coordinate Zn(2+). Residues 101–611 (TGMKNIGNSC…EAYVLFYRKS (511 aa)) form the USP domain. Catalysis depends on cysteine 110, which acts as the Nucleophile. Disordered stretches follow at residues 205–254 (EPIL…GGVG) and 315–342 (HCSSRSCSPHPVESISKHSSTPPRSSPL). Basic and acidic residues predominate over residues 220 to 230 (DDQREGERGGT). Gly residues predominate over residues 242-254 (GEMGDGEGGGGVG). The segment covering 333 to 342 (SSTPPRSSPL) has biased composition (low complexity). Histidine 569 acts as the Proton acceptor in catalysis. DUSP domains are found at residues 613-706 (EEAE…LYVC) and 715-818 (ALAK…RQTV).

Belongs to the peptidase C19 family. USP20/USP33 subfamily.

It is found in the cytoplasm. The protein resides in the perinuclear region. The protein localises to the cytoskeleton. It localises to the microtubule organizing center. Its subcellular location is the centrosome. The enzyme catalyses Thiol-dependent hydrolysis of ester, thioester, amide, peptide and isopeptide bonds formed by the C-terminal Gly of ubiquitin (a 76-residue protein attached to proteins as an intracellular targeting signal).. Functionally, deubiquitinating enzyme involved in beta-2 adrenergic receptor (adrb2) recycling. Acts as a regulator of G-protein coupled receptor (GPCR) signaling by mediating the deubiquitination beta-2 adrenergic receptor (adrb2). Plays a central role in adrb2 recycling and resensitization after prolonged agonist stimulation by constitutively binding adrb2, mediating deubiquitination of adrb2 and inhibiting lysosomal trafficking of adrb2. Mediates deubiquitination of both 'Lys-48'- and 'Lys-63'-linked polyubiquitin chains. The protein is Ubiquitin carboxyl-terminal hydrolase 20 (usp20) of Xenopus laevis (African clawed frog).